The sequence spans 123 residues: Fluoride-specific ion channel FluC (123 aa).

A run of 4 helical transmembrane segments spans residues 7 to 27 (MAIALGGAFGAVARFYISGLL), 39 to 59 (MVNSIASLILGYLYGLLFWGF), 68 to 88 (FFGTGFCGALSTFSTFSYETF), and 101 to 121 (LNILANVIITIALVFAGFMLA). Residues G75 and S78 each coordinate Na(+).

This sequence belongs to the fluoride channel Fluc/FEX (TC 1.A.43) family.

It is found in the cell membrane. The catalysed reaction is fluoride(in) = fluoride(out). Its activity is regulated as follows. Na(+) is not transported, but it plays an essential structural role and its presence is essential for fluoride channel function. Fluoride-specific ion channel. Important for reducing fluoride concentration in the cell, thus reducing its toxicity. This is Fluoride-specific ion channel FluC from Thermococcus kodakarensis (strain ATCC BAA-918 / JCM 12380 / KOD1) (Pyrococcus kodakaraensis (strain KOD1)).